The sequence spans 423 residues: AP-1 complex subunit mu-1 (423 aa).

Residue Ser2 is modified to N-acetylserine. Thr152, Thr154, and Thr223 each carry phosphothreonine. Residues 168–421 (KNEVFLDVIE…ITQNGDYQLR (254 aa)) form the MHD domain.

Belongs to the adaptor complexes medium subunit family. Adaptor protein complex 1 (AP-1) is a heterotetramer composed of two large adaptins (gamma-type subunit AP1G1 and beta-type subunit AP1B1), a medium adaptin (mu-type subunit AP1M1 or AP1M2) and a small adaptin (sigma-type subunit AP1S1 or AP1S2 or AP1S3). Interacts with MARCHF11. Phosphorylation of membrane-bound AP1M1/AP1M2 increases its affinity for sorting signals.

The protein localises to the cytoplasmic vesicle. It is found in the clathrin-coated vesicle membrane. The protein resides in the golgi apparatus. Subunit of clathrin-associated adaptor protein complex 1 that plays a role in protein sorting in the trans-Golgi network (TGN) and endosomes. The AP complexes mediate the recruitment of clathrin to membranes and the recognition of sorting signals within the cytosolic tails of transmembrane cargo molecules. The sequence is that of AP-1 complex subunit mu-1 from Rattus norvegicus (Rat).